Consider the following 626-residue polypeptide: MSLISAVPLASSCVSKSLISSVREHTALRRAIATLQMSRRGKSVAASIRMSSATAGSDDGVKRRIGDYHSNLWDDNFIQSLSSPYGASSYGEHADRLIGEVKEIFNSFSIADGELISPVNDLLQQLWMVDNVERLGIDRHFQTEIKVALDYVYRYWSEEGIGCGRDSAFTDLNTTALAFRIFRLHGYTVSSDVFEHFKDQKGQFAASANDTELQTRSVFNLFRASLIAFPEEKVLEEAEKFAAAYLKAALQTLPVSGLSREIQYVFDYRWHSNLPRLEARSYIDILADNTISGTPDANTKKLLELAKLEFNIFHSVQQKELQCLWRWWKEWGCPELTFIRHRYVEFYTLVSGIDMVPEHATFRLSCVKTCHLITILDDMYDTFGTIDELRLFTAAVKRWDPSATECLPEYMKGVYMVLYETVNEMAKEAQKSQRRDTLGYVRQALEDYIGSYLKEAQWIATGYVPTFQEYFENGKLSSGHRIATLQPILTLSIPFPHHILQEIDFPSKFNDYAASILRLRGDTRCYKADSARGEEASCISCYMKDNPGSTQEDALNHINGMIEDMIKKLNWEFLRPDNNAPISSKKHAFNISRGLHHFYNYRDGYSVASKETKDLVIKTVLEPVLM.

The N-terminal 45 residues, 1-45 (MSLISAVPLASSCVSKSLISSVREHTALRRAIATLQMSRRGKSVA), are a transit peptide targeting the chloroplast. D377, D381, and D529 together coordinate Mg(2+). A DDXXD motif motif is present at residues 377–381 (DDMYD).

This sequence belongs to the terpene synthase family. Tpsd subfamily. Mg(2+) is required as a cofactor. The cofactor is Mn(2+).

The protein resides in the plastid. It localises to the chloroplast. The enzyme catalyses (2E)-geranyl diphosphate = (+)-car-3-ene + diphosphate. It catalyses the reaction (2E)-geranyl diphosphate = terpinolene + diphosphate. It functions in the pathway terpene metabolism; oleoresin biosynthesis. Its pathway is secondary metabolite biosynthesis; terpenoid biosynthesis. Monoterpene synthase (TPS) involved in the biosynthesis of monoterpene natural products included in conifer oleoresin secretions and volatile emissions; these compounds contribute to biotic and abiotic stress defense against herbivores and pathogens. Catalyzes the conversion of (2E)-geranyl diphosphate (GPP) to (+)-car-3-ene and, to a lower extent, to terpinolene. This is (+)-3-carene synthase 1, chloroplastic from Pinus contorta (Shore pine).